Reading from the N-terminus, the 683-residue chain is DNA-directed RNA polymerase subunit beta' (683 aa).

Positions 69, 71, 87, and 90 each coordinate Zn(2+). Mg(2+) is bound by residues D489, D491, and D493.

Belongs to the RNA polymerase beta' chain family. RpoC1 subfamily. In terms of assembly, in plastids the minimal PEP RNA polymerase catalytic core is composed of four subunits: alpha, beta, beta', and beta''. When a (nuclear-encoded) sigma factor is associated with the core the holoenzyme is formed, which can initiate transcription. Requires Mg(2+) as cofactor. Zn(2+) is required as a cofactor.

It is found in the plastid. Its subcellular location is the chloroplast. It catalyses the reaction RNA(n) + a ribonucleoside 5'-triphosphate = RNA(n+1) + diphosphate. Functionally, DNA-dependent RNA polymerase catalyzes the transcription of DNA into RNA using the four ribonucleoside triphosphates as substrates. This chain is DNA-directed RNA polymerase subunit beta', found in Zea mays (Maize).